The sequence spans 357 residues: MQTPQIKLDLIEQKYHLQAQKANLKLAKLDSKKLFSFYKKVDKIINPFYFLNSKKSIPFFNSKLLNIEQDPLFFNNISVFVNKHNDGQIIKCCSGVIEPNKITVIFGESGSGKTTLIKQLGLFEKPSFGYINCANYCYFANQYQQKITKNFKQKIGYILQKAEDQFFCDSILEEVLTGAVNLKLCHKKDVNYAKKYLDLCGLENIPLIKNPIELSDGQKKRLALASVLAMQVKFLILDEPTVGLDQMAISNLSKMLVAMKQTTRIVIVSHDVDFIFETADKIIHLHQGKIIHQTTVNDFFSNTSWLMQYGITPPVIIQAVKMFNEKGIAFKNQAEIKNLDDLISELKNLFSCKKPVF.

The region spanning 72–312 (LFFNNISVFV…TSWLMQYGIT (241 aa)) is the ABC transporter domain. 107-114 (GESGSGKT) is a binding site for ATP.

Belongs to the ABC transporter superfamily.

The polypeptide is Putative ABC transporter ATP-binding protein MG303 (Mycoplasma genitalium (strain ATCC 33530 / DSM 19775 / NCTC 10195 / G37) (Mycoplasmoides genitalium)).